Consider the following 211-residue polypeptide: Mediator of RNA polymerase II transcription subunit 20 (211 aa).

Belongs to the Mediator complex subunit 20 family. In terms of assembly, component of the Mediator complex.

The protein localises to the nucleus. In terms of biological role, component of the Mediator complex, a coactivator involved in the regulated transcription of nearly all RNA polymerase II-dependent genes. Mediator functions as a bridge to convey information from gene-specific regulatory proteins to the basal RNA polymerase II transcription machinery. Mediator is recruited to promoters by direct interactions with regulatory proteins and serves as a scaffold for the assembly of a functional preinitiation complex with RNA polymerase II and the general transcription factors. This chain is Mediator of RNA polymerase II transcription subunit 20 (med20), found in Xenopus laevis (African clawed frog).